We begin with the raw amino-acid sequence, 891 residues long: MSQGSQVHIFLGAPVAPLKTTVSQGTASLMSTANAWEKVRLFYKQHSLYLKAGDQEFKNLEDCQVPKGLGPPGLLSGDVLTTSVRRSAQVDEDFKHSASEAQSVKSQVNLSDMTSGQMCGLGDGVQHLPEEEKDQKLQCKNKKITDEQSKNQSDPCVRNFQRDLFALDLKCAAKLDLGCCTEQMSTGTKPEPTGHRERQSQESFSDTRCEPQSEGAVRKASDQRLSAEAEFLSVLTSSQRAFLAQGNDKGQDCINKSTVNMEAEPTGSQGVRRTEGDFSKPGGDFEEESENEQSQVYSLELFSPVCPESESSHSHINPGKNLENTSSQELFSNEENLPPNELCSSHPSTANRSWSCKDDSHHSKALSEVHQVSKKPRMDSNIREAAKAVPQRVMSELKDSKKISLIKNCDSKNQKYNCLVMVLTPCHVKEITIKSGPNSGSKVPLATIVVIDQSEIKKRVVLWRTAAFGALTVFLGDIILLTDVVLYEDQWIGETVLQSTFTSQLLNLGSYSYVQPEKYSNVIANVILQDLLTYVSTKHSYLKDLPQRQPQKMNTVEFVELEQLQPDILVHAVLRVVDVTVLTEALYSYRGQKQRKVVLTVEQAQGQHYVLVLWGPGAAWYTQLQRKKDSIWEFKYLFVQRNSILENLELHTTLWSSCECLFDDDTRAISFKTKFQKNTSSFVKISDLATHLEDKYSGVVLIKAKVSELVFSAAAAQKIALNARSTLQSIFSSLPSIVYAGCAHCGSELETDENRIYRQCLSCLPFVGKKIFYRPALMTIVDGRYNTCVHVGSKMMEQILLNISPDCLNRVIVPSSEVTYGMVASDLLHSLLAVSAEPCVLKIQSLFELDENSYPLQQDFSLLDFCPDSRKLWSPGLSLRAEGTGGIPGKE.

A sufficient for interaction with SHLD3 and MAD2L2 region spans residues 1–61 (MSQGSQVHIF…AGDQEFKNLE (61 aa)). The segment at 1-542 (MSQGSQVHIF…TYVSTKHSYL (542 aa)) is interaction with ASTE1. Disordered stretches follow at residues 184-222 (MSTG…KASD), 260-294 (NMEA…NEQS), and 333-357 (NEEN…WSCK). The span at 192–222 (PTGHRERQSQESFSDTRCEPQSEGAVRKASD) shows a compositional bias: basic and acidic residues. Composition is skewed to polar residues over residues 260–271 (NMEAEPTGSQGV) and 342–354 (LCSS…NRSW). A mediates interaction with SHLD1 region spans residues 695–866 (KYSGVVLIKA…QQDFSLLDFC (172 aa)).

This sequence belongs to the SHLD2 family. In terms of assembly, component of the shieldin complex, consisting of SHLD1, SHLD2, SHLD3 and MAD2L2/REV7. Within the complex, SHLD2 forms a scaffold which interacts with a SHLD3-MAD2L2 subcomplex via its N-terminus, and with SHLD1 via its C-terminus. Interacts with TP53BP1. Interacts with RIF1. Interacts with ASTE1.

The protein resides in the chromosome. Component of the shieldin complex, which plays an important role in repair of DNA double-stranded breaks (DSBs). During G1 and S phase of the cell cycle, the complex functions downstream of TP53BP1 to promote non-homologous end joining (NHEJ) and suppress DNA end resection. Mediates various NHEJ-dependent processes including immunoglobulin class-switch recombination, and fusion of unprotected telomeres. The protein is Shieldin complex subunit 2 of Mus musculus (Mouse).